The primary structure comprises 438 residues: Dihydroorotase (438 aa).

Zn(2+) is bound by residues histidine 58 and histidine 60. Substrate contacts are provided by residues 60–62 and asparagine 92; that span reads HLR. 3 residues coordinate Zn(2+): aspartate 152, histidine 179, and histidine 232. Asparagine 278 is a binding site for substrate. Residue aspartate 305 participates in Zn(2+) binding. Residue aspartate 305 is part of the active site. Residues histidine 309 and 323-324 each bind substrate; that span reads FG.

Belongs to the metallo-dependent hydrolases superfamily. DHOase family. Class I DHOase subfamily. Requires Zn(2+) as cofactor.

The catalysed reaction is (S)-dihydroorotate + H2O = N-carbamoyl-L-aspartate + H(+). It participates in pyrimidine metabolism; UMP biosynthesis via de novo pathway; (S)-dihydroorotate from bicarbonate: step 3/3. Functionally, catalyzes the reversible cyclization of carbamoyl aspartate to dihydroorotate. This Leifsonia xyli subsp. xyli (strain CTCB07) protein is Dihydroorotase.